Reading from the N-terminus, the 558-residue chain is Cytochrome P450 monooxygenase sdnT (558 aa).

The chain crosses the membrane as a helical span at residues 21-41; the sequence is IISLTTCFVCAFAVSFVALAI. The interval 298 to 317 is disordered; the sequence is QNAGSNTRPKPPKRKQDTQP. N-linked (GlcNAc...) asparagine glycans are attached at residues Asn464 and Asn495. Cys505 lines the heme pocket.

Belongs to the cytochrome P450 family. Heme is required as a cofactor.

It is found in the membrane. It functions in the pathway antibiotic biosynthesis. Its function is as follows. Cytochrome P450 monooxygenase; part of the gene cluster that mediates the biosynthesis of sordarin and hypoxysordarin, glycoside antibiotics with a unique tetracyclic diterpene aglycone structure. First, the geranylgeranyl diphosphate synthase sdnC constructs GGDP from farnesyl diphosphate and isopentenyl diphosphate. The diterpene cyclase sdnA then catalyzes the cyclization of GGDP to afford cycloaraneosene. Cycloaraneosene is then hydroxylated four times by the putative cytochrome P450 monooxygenases sdnB, sdnE, sdnF and sdnH to give a hydroxylated cycloaraneosene derivative such as cycloaraneosene-8,9,13,19-tetraol. Although the order of the hydroxylations is unclear, at least C8, C9 and C13 of the cycloaraneosene skeleton are hydroxylated before the sordaricin formation. Dehydration of the 13-hydroxy group of the hydroxylated cycloaraneosene derivative might be catalyzed by an unassigned hypothetical protein such as sdnG and sdnP to construct the cyclopentadiene moiety. The FAD-dependent oxidoreductase sdnN is proposed to catalyze the oxidation at C9 of the hydroxylated cycloaraneosene derivative and also catalyze the Baeyer-Villiger oxidation to give the lactone intermediate. The presumed lactone intermediate would be hydrolyzed to give an acrolein moiety and a carboxylate moiety. Then, [4+2]cycloaddition would occur between the acrolein moiety and the cyclopentadiene moiety to give sordaricin. SdnN might also be involved in the [4+2]cycloaddition after the hypothesized oxidation to accommodate the oxidized product and prompt the [4+2]cycloaddition. GDP-6-deoxy-D-altrose may be biosynthesized from GDP-D-mannose by the putative GDP-mannose-4,6-dehydratase sdnI and the short-chain dehydrogenase sdnK. The glycosyltransferase sdnJ catalyzes the attachment of 6-deoxy-D-altrose onto the 19-hydroxy group of sordaricin to give 4'-O-demethylsordarin. The methyltransferase sdnD would complete the biosynthesis of sordarin. Sordarin can be further modified into hypoxysordarin. The unique acyl chain at the 3'-hydroxy group of hypoxysordarin would be constructed by an iterative type I PKS sdnO and the trans-acting polyketide methyltransferase sdnL. SdnL would be responsible for the introduction of an alpha-methyl group of the polyketide chain. Alternatively, the beta-lactamase-like protein sdnR might be responsible for the cleavage and transfer of the polyketide chain from the PKS sdnO to sordarin. Two putative cytochrome P450 monooxygenases, sdnQ and sdnT, might catalyze the epoxidations of the polyketide chain to complete the biosynthesis of hypoxysordarin. Transcriptional regulators sdnM and sdnS are presumably encoded for the transcriptional regulation of the expression of the sdn gene cluster. In Sordaria araneosa (Pleurage araneosa), this protein is Cytochrome P450 monooxygenase sdnT.